The primary structure comprises 93 residues: Putative ribosomal protein eL43-like (93 aa).

A C4-type zinc finger spans residues 40–61; it reads CSFCGKTKMKRRAVKIRHCNSC.

This sequence belongs to the eukaryotic ribosomal protein eL43 family.

The sequence is that of Putative ribosomal protein eL43-like (RPL37AP8) from Homo sapiens (Human).